The chain runs to 146 residues: Globin (146 aa).

Ala-1 carries the post-translational modification N-acetylalanine. One can recognise a Globin domain in the interval 1–146 (ALTEPQKTAL…LLTMLIKAHS (146 aa)). Heme b-binding residues include His-65 and His-97.

Belongs to the globin family. In terms of assembly, homodimer.

The polypeptide is Globin (Buccinum undatum (Common whelk)).